The primary structure comprises 76 residues: uncharacterized protein (76 aa).

Helical transmembrane passes span 2–22 (LKVA…YSLF), 28–48 (LLIV…VEAI), and 56–76 (EYLL…KFII).

It localises to the cell membrane. This is an uncharacterized protein from Bacillus subtilis (strain 168).